The primary structure comprises 456 residues: Bifunctional protein GlmU (456 aa).

The segment at M1 to R229 is pyrophosphorylase. UDP-N-acetyl-alpha-D-glucosamine is bound by residues L11–G14, K25, Q76, G81–T82, Y103–D105, G140, E154, N169, and N227. D105 is a Mg(2+) binding site. Residue N227 participates in Mg(2+) binding. The segment at L230–E250 is linker. The tract at residues G251 to K456 is N-acetyltransferase. Positions 333 and 351 each coordinate UDP-N-acetyl-alpha-D-glucosamine. The active-site Proton acceptor is H363. UDP-N-acetyl-alpha-D-glucosamine-binding residues include Y366 and N377. Acetyl-CoA contacts are provided by residues A380, N386–Y387, S405, A423, and R440.

It in the N-terminal section; belongs to the N-acetylglucosamine-1-phosphate uridyltransferase family. This sequence in the C-terminal section; belongs to the transferase hexapeptide repeat family. As to quaternary structure, homotrimer. Mg(2+) serves as cofactor.

It localises to the cytoplasm. It catalyses the reaction alpha-D-glucosamine 1-phosphate + acetyl-CoA = N-acetyl-alpha-D-glucosamine 1-phosphate + CoA + H(+). The catalysed reaction is N-acetyl-alpha-D-glucosamine 1-phosphate + UTP + H(+) = UDP-N-acetyl-alpha-D-glucosamine + diphosphate. It functions in the pathway nucleotide-sugar biosynthesis; UDP-N-acetyl-alpha-D-glucosamine biosynthesis; N-acetyl-alpha-D-glucosamine 1-phosphate from alpha-D-glucosamine 6-phosphate (route II): step 2/2. The protein operates within nucleotide-sugar biosynthesis; UDP-N-acetyl-alpha-D-glucosamine biosynthesis; UDP-N-acetyl-alpha-D-glucosamine from N-acetyl-alpha-D-glucosamine 1-phosphate: step 1/1. Its pathway is bacterial outer membrane biogenesis; LPS lipid A biosynthesis. In terms of biological role, catalyzes the last two sequential reactions in the de novo biosynthetic pathway for UDP-N-acetylglucosamine (UDP-GlcNAc). The C-terminal domain catalyzes the transfer of acetyl group from acetyl coenzyme A to glucosamine-1-phosphate (GlcN-1-P) to produce N-acetylglucosamine-1-phosphate (GlcNAc-1-P), which is converted into UDP-GlcNAc by the transfer of uridine 5-monophosphate (from uridine 5-triphosphate), a reaction catalyzed by the N-terminal domain. This is Bifunctional protein GlmU from Haemophilus influenzae (strain PittGG).